The chain runs to 441 residues: Tubulin beta-1 chain (441 aa).

Residues Q11, E69, S138, G142, T143, G144, N204, and N226 each coordinate GTP. E69 is a binding site for Mg(2+).

This sequence belongs to the tubulin family. As to quaternary structure, dimer of alpha and beta chains. A typical microtubule is a hollow water-filled tube with an outer diameter of 25 nm and an inner diameter of 15 nM. Alpha-beta heterodimers associate head-to-tail to form protofilaments running lengthwise along the microtubule wall with the beta-tubulin subunit facing the microtubule plus end conferring a structural polarity. Microtubules usually have 13 protofilaments but different protofilament numbers can be found in some organisms and specialized cells. The cofactor is Mg(2+). As to expression, expressed primarily in touch receptor neurons.

It is found in the cytoplasm. Its subcellular location is the cytoskeleton. Functionally, tubulin is the major constituent of microtubules, a cylinder consisting of laterally associated linear protofilaments composed of alpha- and beta-tubulin heterodimers. Microtubules grow by the addition of GTP-tubulin dimers to the microtubule end, where a stabilizing cap forms. Below the cap, tubulin dimers are in GDP-bound state, owing to GTPase activity of alpha-tubulin. Plays a role in mechanosensory transduction (touch sensitivity). Mec-7 beta-tubulin is required for the production of 15-protofilament microtubules. The polypeptide is Tubulin beta-1 chain (mec-7) (Caenorhabditis briggsae).